The primary structure comprises 193 residues: NADH-quinone oxidoreductase subunit B (193 aa).

Positions 72, 73, 137, and 167 each coordinate [4Fe-4S] cluster.

It belongs to the complex I 20 kDa subunit family. As to quaternary structure, NDH-1 is composed of 14 different subunits. Subunits NuoB, C, D, E, F, and G constitute the peripheral sector of the complex. Requires [4Fe-4S] cluster as cofactor.

It localises to the cell inner membrane. It carries out the reaction a quinone + NADH + 5 H(+)(in) = a quinol + NAD(+) + 4 H(+)(out). Functionally, NDH-1 shuttles electrons from NADH, via FMN and iron-sulfur (Fe-S) centers, to quinones in the respiratory chain. The immediate electron acceptor for the enzyme in this species is believed to be ubiquinone. Couples the redox reaction to proton translocation (for every two electrons transferred, four hydrogen ions are translocated across the cytoplasmic membrane), and thus conserves the redox energy in a proton gradient. In Bradyrhizobium sp. (strain ORS 278), this protein is NADH-quinone oxidoreductase subunit B.